The chain runs to 50 residues: Insulin-1 (50 aa).

Cystine bridges form between cysteine 7-cysteine 36, cysteine 19-cysteine 49, and cysteine 35-cysteine 40.

The protein belongs to the insulin family. Heterodimer of a B chain and an A chain linked by two disulfide bonds.

The protein localises to the secreted. In terms of biological role, insulin decreases blood glucose concentration. It increases cell permeability to monosaccharides, amino acids and fatty acids. It accelerates glycolysis, the pentose phosphate cycle, and glycogen synthesis in liver. The chain is Insulin-1 from Thunnus orientalis (North Pacific bluefin tuna).